Reading from the N-terminus, the 487-residue chain is Malonate-semialdehyde dehydrogenase (487 aa).

NAD(+) contacts are provided by Ala150, Phe152, Lys176, Glu179, Arg180, Ser229, and Thr251. Cys284 functions as the Nucleophile in the catalytic mechanism. Glu382 is a binding site for NAD(+).

It belongs to the aldehyde dehydrogenase family. IolA subfamily. Homotetramer.

It carries out the reaction 3-oxopropanoate + NAD(+) + CoA + H2O = hydrogencarbonate + acetyl-CoA + NADH + H(+). The enzyme catalyses 2-methyl-3-oxopropanoate + NAD(+) + CoA + H2O = propanoyl-CoA + hydrogencarbonate + NADH + H(+). It participates in polyol metabolism; myo-inositol degradation into acetyl-CoA; acetyl-CoA from myo-inositol: step 7/7. Its function is as follows. Catalyzes the oxidation of malonate semialdehyde (MSA) and methylmalonate semialdehyde (MMSA) into acetyl-CoA and propanoyl-CoA, respectively. Is involved in a myo-inositol catabolic pathway. Bicarbonate, and not CO2, is the end-product of the enzymatic reaction. The chain is Malonate-semialdehyde dehydrogenase from Bacillus velezensis (strain DSM 23117 / BGSC 10A6 / LMG 26770 / FZB42) (Bacillus amyloliquefaciens subsp. plantarum).